The sequence spans 392 residues: ATP phosphoribosyltransferase regulatory subunit (392 aa).

Belongs to the class-II aminoacyl-tRNA synthetase family. HisZ subfamily. In terms of assembly, heteromultimer composed of HisG and HisZ subunits.

It is found in the cytoplasm. It functions in the pathway amino-acid biosynthesis; L-histidine biosynthesis; L-histidine from 5-phospho-alpha-D-ribose 1-diphosphate: step 1/9. Required for the first step of histidine biosynthesis. May allow the feedback regulation of ATP phosphoribosyltransferase activity by histidine. The sequence is that of ATP phosphoribosyltransferase regulatory subunit from Marinomonas sp. (strain MWYL1).